The chain runs to 852 residues: Exported protein YdbA (852 aa).

The first 21 residues, 1–21, serve as a signal peptide directing secretion; it reads MQRKTLLSACIALALSGQGWA. Disordered regions lie at residues 30-50, 91-145, 307-354, 407-449, and 506-531; these read TTGE…KLSP, DDDH…FNND, TITN…QDGD, TNGG…KVIQ, and NGGT…VDGK. Positions 307–319 are enriched in low complexity; it reads TITNGGTGTQING. A compositionally biased stretch (polar residues) spans 339 to 348; that stretch reads GTEINGNNGK. The segment covering 506-516 has biased composition (low complexity); the sequence is NGGTGTQINGN. Residues 517-526 are compositionally biased toward polar residues; that stretch reads DATANNSGKT.

It is found in the secreted. Functionally, the full-length protein (which is about 2000 amino acids long) is part of the autotransporter family. This is Exported protein YdbA (ydbA) from Escherichia coli (strain K12).